A 466-amino-acid chain; its full sequence is 3-isopropylmalate dehydratase large subunit (466 aa).

[4Fe-4S] cluster-binding residues include cysteine 347, cysteine 407, and cysteine 410.

This sequence belongs to the aconitase/IPM isomerase family. LeuC type 1 subfamily. As to quaternary structure, heterodimer of LeuC and LeuD. The cofactor is [4Fe-4S] cluster.

It catalyses the reaction (2R,3S)-3-isopropylmalate = (2S)-2-isopropylmalate. Its pathway is amino-acid biosynthesis; L-leucine biosynthesis; L-leucine from 3-methyl-2-oxobutanoate: step 2/4. In terms of biological role, catalyzes the isomerization between 2-isopropylmalate and 3-isopropylmalate, via the formation of 2-isopropylmaleate. The chain is 3-isopropylmalate dehydratase large subunit from Klebsiella pneumoniae (strain 342).